Consider the following 478-residue polypeptide: Mannose-1-phosphate guanylyltransferase (478 aa).

This sequence belongs to the mannose-6-phosphate isomerase type 2 family.

The enzyme catalyses alpha-D-mannose 1-phosphate + GTP + H(+) = GDP-alpha-D-mannose + diphosphate. Its pathway is nucleotide-sugar biosynthesis; GDP-alpha-D-mannose biosynthesis; GDP-alpha-D-mannose from alpha-D-mannose 1-phosphate (GTP route): step 1/1. In terms of biological role, involved in the biosynthesis of the capsular polysaccharide colanic acid. In Escherichia coli (strain K12), this protein is Mannose-1-phosphate guanylyltransferase (manC).